Here is a 105-residue protein sequence, read N- to C-terminus: Small ribosomal subunit protein uS10 (105 aa).

This sequence belongs to the universal ribosomal protein uS10 family. In terms of assembly, part of the 30S ribosomal subunit.

In terms of biological role, involved in the binding of tRNA to the ribosomes. The chain is Small ribosomal subunit protein uS10 from Agathobacter rectalis (strain ATCC 33656 / DSM 3377 / JCM 17463 / KCTC 5835 / VPI 0990) (Eubacterium rectale).